Reading from the N-terminus, the 244-residue chain is UPF0280 protein MJ1526 (244 aa).

Belongs to the UPF0280 family.

This Methanocaldococcus jannaschii (strain ATCC 43067 / DSM 2661 / JAL-1 / JCM 10045 / NBRC 100440) (Methanococcus jannaschii) protein is UPF0280 protein MJ1526.